Consider the following 274-residue polypeptide: Penicillin-insensitive murein endopeptidase (274 aa).

The signal sequence occupies residues 1-19 (MKKTAIALLAWFVSSASLA). Disulfide bonds link cysteine 44/cysteine 265, cysteine 187/cysteine 235, and cysteine 216/cysteine 223. Positions 110, 113, 120, 147, 150, and 211 each coordinate Zn(2+). The interval 225-274 (DQPLPPPGDGCGAELQSWFEPPKPGTTKPEKKTPPPLPPSCQALLDEHVL) is disordered.

Belongs to the peptidase M74 family. In terms of assembly, dimer. Requires Zn(2+) as cofactor.

The protein localises to the periplasm. Its function is as follows. Murein endopeptidase that cleaves the D-alanyl-meso-2,6-diamino-pimelyl amide bond that connects peptidoglycan strands. Likely plays a role in the removal of murein from the sacculus. In Salmonella heidelberg (strain SL476), this protein is Penicillin-insensitive murein endopeptidase.